We begin with the raw amino-acid sequence, 638 residues long: 1-deoxy-D-xylulose-5-phosphate synthase (638 aa).

Thiamine diphosphate-binding positions include histidine 72 and 113–115; that span reads GHA. Aspartate 144 is a binding site for Mg(2+). Thiamine diphosphate is bound by residues 145-146, asparagine 174, tyrosine 289, and glutamate 372; that span reads GA. Residue asparagine 174 participates in Mg(2+) binding.

The protein belongs to the transketolase family. DXPS subfamily. As to quaternary structure, homodimer. Requires Mg(2+) as cofactor. Thiamine diphosphate serves as cofactor.

It carries out the reaction D-glyceraldehyde 3-phosphate + pyruvate + H(+) = 1-deoxy-D-xylulose 5-phosphate + CO2. It participates in metabolic intermediate biosynthesis; 1-deoxy-D-xylulose 5-phosphate biosynthesis; 1-deoxy-D-xylulose 5-phosphate from D-glyceraldehyde 3-phosphate and pyruvate: step 1/1. Catalyzes the acyloin condensation reaction between C atoms 2 and 3 of pyruvate and glyceraldehyde 3-phosphate to yield 1-deoxy-D-xylulose-5-phosphate (DXP). This Gloeobacter violaceus (strain ATCC 29082 / PCC 7421) protein is 1-deoxy-D-xylulose-5-phosphate synthase.